The following is a 431-amino-acid chain: Histidinol dehydrogenase (431 aa).

Positions 127, 189, and 212 each coordinate NAD(+). S237, Q259, and H262 together coordinate substrate. Zn(2+) contacts are provided by Q259 and H262. Active-site proton acceptor residues include E326 and H327. Residues H327, D360, E414, and H419 each contribute to the substrate site. D360 serves as a coordination point for Zn(2+). Residue H419 participates in Zn(2+) binding.

This sequence belongs to the histidinol dehydrogenase family. Requires Zn(2+) as cofactor.

The catalysed reaction is L-histidinol + 2 NAD(+) + H2O = L-histidine + 2 NADH + 3 H(+). The protein operates within amino-acid biosynthesis; L-histidine biosynthesis; L-histidine from 5-phospho-alpha-D-ribose 1-diphosphate: step 9/9. Catalyzes the sequential NAD-dependent oxidations of L-histidinol to L-histidinaldehyde and then to L-histidine. The polypeptide is Histidinol dehydrogenase (Xylella fastidiosa (strain 9a5c)).